Here is a 153-residue protein sequence, read N- to C-terminus: 3-hydroxyacyl-[acyl-carrier-protein] dehydratase FabZ (153 aa).

The active site involves H54.

Belongs to the thioester dehydratase family. FabZ subfamily.

It localises to the cytoplasm. The enzyme catalyses a (3R)-hydroxyacyl-[ACP] = a (2E)-enoyl-[ACP] + H2O. In terms of biological role, involved in unsaturated fatty acids biosynthesis. Catalyzes the dehydration of short chain beta-hydroxyacyl-ACPs and long chain saturated and unsaturated beta-hydroxyacyl-ACPs. This is 3-hydroxyacyl-[acyl-carrier-protein] dehydratase FabZ from Chlamydia trachomatis serovar L2 (strain ATCC VR-902B / DSM 19102 / 434/Bu).